We begin with the raw amino-acid sequence, 343 residues long: Zinc finger protein Gfi-1b (343 aa).

Residues 1–20 (MPRSFLVKSKKTHTYNQHRY) are mediates repression of transcription. The SNAG domain stretch occupies residues 1–20 (MPRSFLVKSKKTHTYNQHRY). The segment at 51–77 (STDPTEKQHTPENVITEEARSDPGDPR) is disordered. A compositionally biased stretch (basic and acidic residues) spans 67–77 (EEARSDPGDPR). C2H2-type zinc fingers lie at residues 176–199 (YHCV…RRSH), 205–227 (FVCN…LNVH), 233–255 (FECK…LLIH), 261–283 (YPCQ…TYIH), 289–311 (HKCQ…SRKH), and 317–340 (FSCD…ENQH).

Its subcellular location is the nucleus. Functionally, essential transcriptional regulator necessary for development and differentiation of erythroid and megakaryocytic lineages. Alters histone methylation by recruiting histone methyltransferase to target genes promoters. Plays a role in heterochromatin formation. The polypeptide is Zinc finger protein Gfi-1b (gfi1b) (Xenopus laevis (African clawed frog)).